The chain runs to 98 residues: NADH-ubiquinone oxidoreductase chain 4L (98 aa).

A run of 3 helical transmembrane segments spans residues 2-22, 28-48, and 61-81; these read PSIS…MLMF, SSLL…TLII, and IMLL…LVMV.

Belongs to the complex I subunit 4L family. Core subunit of respiratory chain NADH dehydrogenase (Complex I) which is composed of 45 different subunits.

The protein resides in the mitochondrion inner membrane. It carries out the reaction a ubiquinone + NADH + 5 H(+)(in) = a ubiquinol + NAD(+) + 4 H(+)(out). In terms of biological role, core subunit of the mitochondrial membrane respiratory chain NADH dehydrogenase (Complex I) which catalyzes electron transfer from NADH through the respiratory chain, using ubiquinone as an electron acceptor. Part of the enzyme membrane arm which is embedded in the lipid bilayer and involved in proton translocation. This chain is NADH-ubiquinone oxidoreductase chain 4L (MT-ND4L), found in Allocebus trichotis (Hairy-eared dwarf lemur).